Consider the following 1287-residue polypeptide: DNA-directed RNA polymerase 147 kDa polypeptide (1287 aa).

Belongs to the poxviridae DNA-directed RNA polymerase 147 kDa subunit family. In terms of assembly, the DNA-dependent RNA polymerase used for intermediate and late genes expression consists of eight subunits Rpo30/OPG66, Rpo7/OPG90, Rpo22/OPG103, Rpo147/OPG105, Rpo18/OPG119, Rpo19/OPG131, Rpo132/OPG151 and Rpo35/OPG156. The same holoenzyme, with the addition of the transcription-specificity factor OPG109, is used for early gene expression.

It is found in the virion. The catalysed reaction is RNA(n) + a ribonucleoside 5'-triphosphate = RNA(n+1) + diphosphate. Its function is as follows. Part of the DNA-dependent RNA polymerase which catalyzes the transcription of viral DNA into RNA using the four ribonucleoside triphosphates as substrates. Responsible for the transcription of early, intermediate and late genes. DNA-dependent RNA polymerase associates with the early transcription factor (ETF), itself composed of OPG118 and OPG133, thereby allowing the early genes transcription. Late transcription, and probably also intermediate transcription, require newly synthesized RNA polymerase. This is DNA-directed RNA polymerase 147 kDa polypeptide (OPG105) from Bos taurus (Bovine).